Reading from the N-terminus, the 1042-residue chain is Probable serine/threonine protein kinase IRE4 (1042 aa).

Basic and acidic residues-rich tracts occupy residues 1–10 (MAEENRKDRG), 102–115 (EEIK…GKDE), and 314–327 (QRNE…RRDK). 3 disordered regions span residues 1–75 (MAEE…GTKL), 90–115 (PPKY…GKDE), and 297–327 (WGST…RRDK). A C2H2-type; atypical zinc finger spans residues 402 to 421 (CRICEEEVPLFHLEPHSYIC). Residues 670 to 955 (FEIIKPISRG…AAEVKSHPFF (286 aa)) form the Protein kinase domain. Residues 676-684 (ISRGAFGKV) and Lys-699 each bind ATP. The Proton acceptor role is filled by Asp-793. The disordered stretch occupies residues 830–850 (ESDVSPRTNSHHFQKNQEEER). The residue at position 854 (Ser-854) is a Phosphoserine. The AGC-kinase C-terminal domain occupies 956–1042 (QGVDWENLAL…KLFFLLLCVF (87 aa)).

It belongs to the protein kinase superfamily. AGC Ser/Thr protein kinase family.

The enzyme catalyses L-seryl-[protein] + ATP = O-phospho-L-seryl-[protein] + ADP + H(+). The catalysed reaction is L-threonyl-[protein] + ATP = O-phospho-L-threonyl-[protein] + ADP + H(+). This is Probable serine/threonine protein kinase IRE4 from Arabidopsis thaliana (Mouse-ear cress).